Consider the following 1263-residue polypeptide: Condensin complex subunit dpy-26 (1263 aa).

A compositionally biased stretch (polar residues) spans 1–10; that stretch reads MDVPSSSNVT. A disordered region spans residues 1-29; that stretch reads MDVPSSSNVTGRRKRQVLDDDEDDGFRST. Positions 691-725 form a coiled coil; that stretch reads NEQMDETEVEERNEQDVQRELEDIALAADEVAELM. Disordered stretches follow at residues 1098–1118 and 1225–1263; these read YQAA…GTAN and FSNL…EMEE. Residues 1106–1118 show a composition bias toward polar residues; it reads NNQPTTSTYGTAN. Positions 1230 to 1241 are enriched in basic residues; that stretch reads RRPKAVPVRKGR.

As to quaternary structure, component of the condensin I complex, which contains the mix-1/SMC2 and smc-4/SMC4 heterodimer, and three non SMC subunits that probably regulate the complex: dpy-26, capg-1 and dpy-28. Within the complex, interacts with dpy-28, mix-1, smc-4 and capg-1. Component of the dosage compensation complex, which consists of the condensin I-like components mix-1/SMC2 and dpy-27/SMC4, and the three non SMC subunits dpy-26, capg-1 and dpy-28. Within the complex, interacts with dpy-27, dpy-28, mix-1 and capg-1. The interaction with dpy-27 is required for dpy-27 protein stability. Interacts with smcl-1. Expressed in embryos and in somatic and germline tissues in L4 stage larvae (at protein level).

The protein resides in the nucleus. It localises to the chromosome. Required for both chromosome condensation and segregation and for X-chromosome dosage compensation depending on its binding partners. Member of the condensin I complex, a complex required for conversion of interphase chromatin into mitotic-like condense chromosomes and for proper chromosome segregation in mitosis and meiosis. As a member of the condensin I complex, further controls the crossover number and distribution in meiosis by restricting double strand break formation, probably by influencing higher-order chromosome structure. Plays a role in robust cytokinesis upon presence of chromatin obstructions. Also a member of the condensin I-like dosage compensation complex that associates specifically with hermaphrodite X chromosomes to reduce their gene transcription during interphase, possibly through chromatin reorganization. As a member of the dosage compensation complex, also binds to regulatory regions of the autosomal her-1 gene, required for male development, possibly contributing to its repression in hermaphrodites. The sequence is that of Condensin complex subunit dpy-26 from Caenorhabditis elegans.